The primary structure comprises 468 residues: Soluble pyridine nucleotide transhydrogenase (468 aa).

36 to 45 (ERYKNVGGGC) lines the FAD pocket.

This sequence belongs to the class-I pyridine nucleotide-disulfide oxidoreductase family. It depends on FAD as a cofactor.

It is found in the cytoplasm. The catalysed reaction is NAD(+) + NADPH = NADH + NADP(+). Functionally, conversion of NADPH, generated by peripheral catabolic pathways, to NADH, which can enter the respiratory chain for energy generation. The protein is Soluble pyridine nucleotide transhydrogenase of Hamiltonella defensa subsp. Acyrthosiphon pisum (strain 5AT).